Consider the following 265-residue polypeptide: Glutamate racemase (265 aa).

Residues 9–10 and 41–42 each bind substrate; these read DS and YG. The Proton donor/acceptor role is filled by Cys73. 74-75 contacts substrate; sequence NT. Cys180 serves as the catalytic Proton donor/acceptor. Substrate is bound at residue 181–182; the sequence is TH.

This sequence belongs to the aspartate/glutamate racemases family.

It carries out the reaction L-glutamate = D-glutamate. It functions in the pathway cell wall biogenesis; peptidoglycan biosynthesis. Provides the (R)-glutamate required for cell wall biosynthesis. This is Glutamate racemase from Aliivibrio salmonicida (strain LFI1238) (Vibrio salmonicida (strain LFI1238)).